We begin with the raw amino-acid sequence, 832 residues long: Beta-galactosidase (832 aa).

An N-terminal signal peptide occupies residues 1 to 25; that stretch reads MALKLVLMLMVALLAAVWSPPAVTA. Glu183 serves as the catalytic Proton donor. Residue Glu252 is the Nucleophile of the active site. The SUEL-type lectin domain maps to 741–832; the sequence is AYGRPKVHLS…KKLAVEAICE (92 aa).

This sequence belongs to the glycosyl hydrolase 35 family.

It is found in the secreted. Its subcellular location is the extracellular space. It localises to the apoplast. The enzyme catalyses Hydrolysis of terminal non-reducing beta-D-galactose residues in beta-D-galactosides.. In Asparagus officinalis (Garden asparagus), this protein is Beta-galactosidase.